Here is a 208-residue protein sequence, read N- to C-terminus: MADSNALDGLTQALRKLPGVGAKSAARMAFHLLQHDKPGALQIARALEHAVQSIRHCALCNTLTEQEVCVTCANPQRDRSKLCVVETPADQAALERTLAYRGLYFVLMGKLSPLDGVGPNDIGLQKLFDRAVPKDEHGQPLPAASREVQEVILATNFTAEGEATAHVIAQALKSRGMQVTRLARGVPVGSELEYVDLGTIAHALTDRR.

A C4-type zinc finger spans residues 57-72; that stretch reads CALCNTLTEQEVCVTC. The Toprim domain maps to 80–187; that stretch reads SKLCVVETPA…QVTRLARGVP (108 aa).

It belongs to the RecR family.

Its function is as follows. May play a role in DNA repair. It seems to be involved in an RecBC-independent recombinational process of DNA repair. It may act with RecF and RecO. The polypeptide is Recombination protein RecR (Polaromonas naphthalenivorans (strain CJ2)).